Here is a 146-residue protein sequence, read N- to C-terminus: Large ribosomal subunit protein uL15 (146 aa).

The span at methionine 1–arginine 13 shows a compositional bias: basic and acidic residues. Residues methionine 1–glutamate 51 are disordered. Composition is skewed to gly residues over residues threonine 23 to glutamine 35 and serine 42 to glutamate 51.

It belongs to the universal ribosomal protein uL15 family. Part of the 50S ribosomal subunit.

In terms of biological role, binds to the 23S rRNA. The chain is Large ribosomal subunit protein uL15 from Streptococcus pneumoniae serotype 2 (strain D39 / NCTC 7466).